A 2620-amino-acid chain; its full sequence is Highly reducing polyketide synthase tazB (2620 aa).

A disordered region spans residues 1–22 (MPFLNGNTTHHEAHSAEPDHGN). The region spanning 1-416 (MPFLNGNTTH…GTNAHCILDD (416 aa)) is the Ketosynthase family 3 (KS3) domain. Over residues 9–22 (THHEAHSAEPDHGN) the composition is skewed to basic and acidic residues. Residues C166, H301, and H340 each act as for beta-ketoacyl synthase activity in the active site. A disordered region spans residues 460–481 (GFNKFDEPRGSDSAGSNANGSH). The segment covering 470–481 (SDSAGSNANGSH) has biased composition (low complexity). The segment at 601–923 (VFTGQGAQYA…PYLATLSRKD (323 aa)) is malonyl-CoA:ACP transacylase (MAT) domain. Positions 993–1128 (HDLFGAPVPD…GEVSPDLKKS (136 aa)) are N-terminal hotdog fold. Positions 993–1313 (HDLFGAPVPD…LAGIRLSPFK (321 aa)) are dehydratase (DH) domain. The PKS/mFAS DH domain occupies 993-1318 (HDLFGAPVPD…LSPFKPESSE (326 aa)). Residue H1025 is the Proton acceptor; for dehydratase activity of the active site. The interval 1157–1318 (TAPVDFTPVY…LSPFKPESSE (162 aa)) is C-terminal hotdog fold. Catalysis depends on D1225, which acts as the Proton donor; for dehydratase activity. Positions 1379–1680 (GLRESREMKD…VDFEASSSIY (302 aa)) are methyltransferase (CMet) domain. The enoyl reductase (ER) domain stretch occupies residues 1910–2227 (GIDSLTWVTD…TGKSIGKVTL (318 aa)). Positions 2251–2425 (SFILAGGLGG…HGASVNLGAV (175 aa)) are ketoreductase (KR) domain. In terms of domain architecture, Carrier spans 2539-2620 (EAARIIHKAL…VSLSSFTKFR (82 aa)). Residue S2576 is modified to O-(pantetheine 4'-phosphoryl)serine.

Its pathway is secondary metabolite biosynthesis. Its function is as follows. Highly reducing polyketide synthase; part of the gene cluster that mediates the biosynthesis of azaterrilone A and other azaphilones, a class of fungal metabolites characterized by a highly oxygenated pyrano-quinone bicyclic core and exhibiting a broad range of bioactivities. The first step of the pathway begins with the non-reducing polyketide synthase tazA that assembles one acetyl-CoA starter unit, five malonyl-CoA units, and catalyzes a series of Claisen condensations, methylation, PT-mediated cyclization, and finally releases the first hexaketide precursor through the R-domain. The tazA product then undergoes reduction on its terminal ketone and the following pyran-ring formation by yet undetermined enzyme(s). Dehydration and enoyl reduction, possibly involving the trans-enoyl reductase tazE leads to the next intermediate. TazD is predicted as an acetyltransferase and might catalyze the acetylation steps leading to the synthesis of azaterrilone A. Azaterrilone A is not the final product of the taz pathway and both the highly reducing polyketide synthase tazB and the dual enzyme tazHJ catalyze late steps of the pathway, leading to the production of the 2 final stereoisomers that contain additional polyketide modification whose structures have still to be determined. This is Highly reducing polyketide synthase tazB from Aspergillus terreus (strain NIH 2624 / FGSC A1156).